Consider the following 548-residue polypeptide: Chaperonin GroEL (548 aa).

Residues 29 to 32, Lys-50, 86 to 90, Gly-414, 478 to 480, and Asp-494 each bind ATP; these read TMGP, DGTTT, and NAA.

This sequence belongs to the chaperonin (HSP60) family. Forms a cylinder of 14 subunits composed of two heptameric rings stacked back-to-back. Interacts with the co-chaperonin GroES.

It localises to the cytoplasm. It catalyses the reaction ATP + H2O + a folded polypeptide = ADP + phosphate + an unfolded polypeptide.. Functionally, together with its co-chaperonin GroES, plays an essential role in assisting protein folding. The GroEL-GroES system forms a nano-cage that allows encapsulation of the non-native substrate proteins and provides a physical environment optimized to promote and accelerate protein folding. The protein is Chaperonin GroEL of Legionella pneumophila (strain Paris).